We begin with the raw amino-acid sequence, 558 residues long: Dihydroxy-acid dehydratase (558 aa).

Mg(2+) is bound at residue Asp81. Position 122 (Cys122) interacts with [2Fe-2S] cluster. Positions 123 and 124 each coordinate Mg(2+). N6-carboxylysine is present on Lys124. [2Fe-2S] cluster is bound at residue Cys195. Glu447 contributes to the Mg(2+) binding site. The active-site Proton acceptor is the Ser473.

The protein belongs to the IlvD/Edd family. In terms of assembly, homodimer. [2Fe-2S] cluster is required as a cofactor. Requires Mg(2+) as cofactor.

The enzyme catalyses (2R)-2,3-dihydroxy-3-methylbutanoate = 3-methyl-2-oxobutanoate + H2O. The catalysed reaction is (2R,3R)-2,3-dihydroxy-3-methylpentanoate = (S)-3-methyl-2-oxopentanoate + H2O. The protein operates within amino-acid biosynthesis; L-isoleucine biosynthesis; L-isoleucine from 2-oxobutanoate: step 3/4. Its pathway is amino-acid biosynthesis; L-valine biosynthesis; L-valine from pyruvate: step 3/4. Functions in the biosynthesis of branched-chain amino acids. Catalyzes the dehydration of (2R,3R)-2,3-dihydroxy-3-methylpentanoate (2,3-dihydroxy-3-methylvalerate) into 2-oxo-3-methylpentanoate (2-oxo-3-methylvalerate) and of (2R)-2,3-dihydroxy-3-methylbutanoate (2,3-dihydroxyisovalerate) into 2-oxo-3-methylbutanoate (2-oxoisovalerate), the penultimate precursor to L-isoleucine and L-valine, respectively. The polypeptide is Dihydroxy-acid dehydratase (Bacillus velezensis (strain DSM 23117 / BGSC 10A6 / LMG 26770 / FZB42) (Bacillus amyloliquefaciens subsp. plantarum)).